A 370-amino-acid chain; its full sequence is Probable G-protein coupled receptor 85 (370 aa).

At 1–25 (MANYSHAADNILQNLSPLTAFLKLT) the chain is on the extracellular side. N-linked (GlcNAc...) asparagine glycosylation is present at asparagine 3. Residues 26–46 (SLGFIIGVSVVGNLLISILLV) traverse the membrane as a helical segment. Residues 47-57 (KDKTLHRAPYY) are Cytoplasmic-facing. A helical membrane pass occupies residues 58–78 (FLLDLCCSDILRSAICFPFVF). Residues 79–96 (NSVKNGSTWTYGTLTCKV) lie on the Extracellular side of the membrane. N-linked (GlcNAc...) asparagine glycosylation is present at asparagine 83. Cysteine 94 and cysteine 172 are joined by a disulfide. The chain crosses the membrane as a helical span at residues 97-117 (IAFLGVLSCFHTAFMLFCISV). The Cytoplasmic segment spans residues 118 to 137 (TRYLAIAHHRFYTKRLTFWT). The chain crosses the membrane as a helical span at residues 138-158 (CLAVICMVWTLSVAMAFPPVL). At 159-188 (DVGTYSFIREEDQCTFQHRSFRANDSLGFM) the chain is on the extracellular side. Asparagine 182 carries an N-linked (GlcNAc...) asparagine glycan. A helical transmembrane segment spans residues 189 to 209 (LLLALILLATQLVYLKLIFFV). Topologically, residues 210–286 (HDRRKMKPVQ…FKMEKRISRM (77 aa)) are cytoplasmic. Residues 287–307 (FYIMTFLFLTLWGPYLVACYW) traverse the membrane as a helical segment. The Extracellular segment spans residues 308-313 (RVFARG). A helical transmembrane segment spans residues 314-334 (PVVPGGFLTAAVWMSFAQAGI). Residues 335–370 (NPFVCIFSNRELRRCFSTTLLYCRKSRLPREPYCVI) lie on the Cytoplasmic side of the membrane.

It belongs to the G-protein coupled receptor 1 family. In terms of assembly, interacts with DLG4 and DLG3. As to expression, highly expressed in brain and testis. Lower levels in small intestine, placenta and spleen. In brain regions, detected in all regions tested, but somewhat lower levels in the corpus callosum, medulla and spinal cord.

The protein localises to the cell membrane. The protein resides in the endoplasmic reticulum. Its function is as follows. Orphan receptor. This is Probable G-protein coupled receptor 85 (GPR85) from Homo sapiens (Human).